The sequence spans 220 residues: Splicing factor U2AF 26 kDa subunit (220 aa).

An N-acetylalanine modification is found at A2. A C3H1-type 1 zinc finger spans residues 12–40 (EKDKVNCSFYFKIGACRHGDRCSRLHNKP). The RRM domain occupies 65–147 (SHCHVSDVEV…QAVHAELSPV (83 aa)). A C3H1-type 2 zinc finger spans residues 149-176 (DFRESCCRQYEMGECTRGGFCNFMHLRP). The segment at 186–220 (YGRGPRRRSPPRSHTGHRPRERNRRRSPDHRHGRF) is disordered. Positions 189-220 (GPRRRSPPRSHTGHRPRERNRRRSPDHRHGRF) are enriched in basic residues.

Belongs to the splicing factor SR family. In terms of assembly, interacts with GFI1, U2AF2 and C1QBP.

Its subcellular location is the nucleus. The protein localises to the nucleus speckle. It is found in the cytoplasm. RNA-binding protein that function as a pre-mRNA splicing factor. Plays a critical role in both constitutive and enhancer-dependent splicing by mediating protein-protein interactions and protein-RNA interactions required for accurate 3'-splice site selection. Acts by enhancing the binding of U2AF2 to weak pyrimidine tracts. Also participates in the regulation of alternative pre-mRNA splicing. Activates exon 5 skipping of PTPRC during T-cell activation; an event reversed by GFI1. Binds to RNA at the AG dinucleotide at the 3'-splice site. Shows a preference for AGC or AGA. This is Splicing factor U2AF 26 kDa subunit (U2AF1L4) from Bos taurus (Bovine).